Reading from the N-terminus, the 94-residue chain is Co-chaperonin GroES (94 aa).

This sequence belongs to the GroES chaperonin family. As to quaternary structure, heptamer of 7 subunits arranged in a ring. Interacts with the chaperonin GroEL.

The protein localises to the cytoplasm. Functionally, together with the chaperonin GroEL, plays an essential role in assisting protein folding. The GroEL-GroES system forms a nano-cage that allows encapsulation of the non-native substrate proteins and provides a physical environment optimized to promote and accelerate protein folding. GroES binds to the apical surface of the GroEL ring, thereby capping the opening of the GroEL channel. This Exiguobacterium sp. (strain ATCC BAA-1283 / AT1b) protein is Co-chaperonin GroES.